We begin with the raw amino-acid sequence, 416 residues long: Lipase (416 aa).

A signal peptide spans 1–28 (MKCCRIMFVLLGLWFVFGLSVPGGRTEA). Serine 141 serves as the catalytic Nucleophile. Residue glycine 314 participates in Ca(2+) binding. Aspartate 345 serves as the catalytic Charge relay system. Residue aspartate 385 participates in Ca(2+) binding. Histidine 386 (charge relay system) is an active-site residue. The Ca(2+) site is built by glutamate 388, aspartate 393, and proline 394.

The protein belongs to the AB hydrolase superfamily. As to quaternary structure, homodimer.

It is found in the secreted. The enzyme catalyses a triacylglycerol + H2O = a diacylglycerol + a fatty acid + H(+). Activity is inhibited by zinc and iron ions, and activated in vitro in 25% v/v DMSO and acetone. Triacylglycerol hydrolase that shows hydrolysis preference towards some of the natural oils such as olive, sunflower and corn oils. The sequence is that of Lipase from Bacillus sp.